The chain runs to 532 residues: MKPCKREIVDFDGIRTHFFPNLALYTCYNEELIAHHSENANRFTSYVFGAVEDSPTEQEILEILFPENANPEAISTGMDACLALGENFLSHYKSFNARLNRQNHSHDLLDAVQEFDEKKILAISRKSRLRKSADSKILTILVNILLSENQEEKFMEICELCSLDLDFDAFVLIKILQLENEENAEEVQIIRENVVDQILEQKPFLAHLLKNGPEKIDEITKLLSVPIIGSSSNQINQLITKICDSSEISDTAVEEHYHQNFKLMNILVRTMIVDRFDLTIDALEQIPVEIKNRMFPGIRIRVLQDTLHFLHQLFKVFLNESQKFDNLAPQSFAKAIKNVWVRHAIIGILDSLKFSLNKDVFNQLVPLIPGSQVSNDVISGKVENAISCAIWIVKTFGTEGSRDSIEKLPWFDSSVELTELINSIEIAVTSVEVEDQTVNFRKIPQKDWLDGNLQKALKTEPTSEKFGISNSLKIKDENQRNQIRGFKDNSKEPNAKVSARFGSKFQRVDSSTKRRLFGGVGVGEPRNCRGFL.

Interacts with pgl-1 and pgl-3; association with either pgl-1 or pgl-3 is not required for P-granule localization. In terms of tissue distribution, highly expressed in the germline.

The protein resides in the cytoplasmic granule. Its function is as follows. Transient component of P-granule which is involved in germline development. The sequence is that of P granule abnormality protein 2 from Caenorhabditis elegans.